The sequence spans 184 residues: uncharacterized protein (184 aa).

This is an uncharacterized protein from Haemophilus influenzae (strain ATCC 51907 / DSM 11121 / KW20 / Rd).